A 122-amino-acid polypeptide reads, in one-letter code: Interferon alpha-inducible protein 27, mitochondrial (122 aa).

Residues 1 to 33 (MEASALTSSAVTSVAKVVRVASGSAVVLPLARI) constitute a mitochondrion transit peptide. The chain crosses the membrane as a helical span at residues 34-57 (ATVVIGGVVAMAAVPMVLSAMGFT). A Glycyl lysine isopeptide (Lys-Gly) (interchain with G-Cter in ubiquitin) cross-link involves residue lysine 69. The next 2 membrane-spanning stretches (helical) occupy residues 71-91 (MSAA…VATL) and 99-119 (LSGL…AVIA). The mediates interaction with SKP2 and hepatitis C virus non-structural protein NS5A stretch occupies residues 76 to 122 (IANGGGVASGSLVATLQSLGATGLSGLTKFILGSIGSAIAAVIARFY). The required for hepatitis C virus non-structural protein NS5A degradation stretch occupies residues 103-112 (TKFILGSIGS).

This sequence belongs to the IFI6/IFI27 family. As to quaternary structure, homodimer. Interacts with hepatitis C virus/HCV non-structural protein NS5A; promotes the ubiquitin-mediated proteasomal degradation of NS5A. Interacts with SKP2; promotes the ubiquitin-mediated proteasomal degradation of NS5A. Interacts with NR4A1. May interact with BCL2. In terms of processing, ubiquitinated by TRIM21 via 'Lys-6'-linked ubiquitin chains leading to IFI27 mitochondrial migration.

The protein resides in the mitochondrion membrane. It localises to the nucleus inner membrane. The protein localises to the endoplasmic reticulum membrane. Its function is as follows. Probable adapter protein involved in different biological processes. Part of the signaling pathways that lead to apoptosis. Involved in type-I interferon-induced apoptosis characterized by a rapid and robust release of cytochrome C from the mitochondria and activation of BAX and caspases 2, 3, 6, 8 and 9. Also functions in TNFSF10-induced apoptosis. May also have a function in the nucleus, where it may be involved in the interferon-induced negative regulation of the transcriptional activity of NR4A1, NR4A2 and NR4A3 through the enhancement of XPO1-mediated nuclear export of these nuclear receptors. May thereby play a role in the vascular response to injury. In the innate immune response, has an antiviral activity towards hepatitis C virus/HCV. May prevent the replication of the virus by recruiting both the hepatitis C virus non-structural protein 5A/NS5A and the ubiquitination machinery via SKP2, promoting the ubiquitin-mediated proteasomal degradation of NS5A. Also promotes virus-induced pyroptosis by activating CASP3 in the mitochondria after 'Lys-6'-linked ubiquitination by TRIM21. The chain is Interferon alpha-inducible protein 27, mitochondrial from Homo sapiens (Human).